The sequence spans 140 residues: Ribosome-binding factor A (140 aa).

Belongs to the RbfA family. As to quaternary structure, monomer. Binds 30S ribosomal subunits, but not 50S ribosomal subunits or 70S ribosomes.

It localises to the cytoplasm. One of several proteins that assist in the late maturation steps of the functional core of the 30S ribosomal subunit. Associates with free 30S ribosomal subunits (but not with 30S subunits that are part of 70S ribosomes or polysomes). Required for efficient processing of 16S rRNA. May interact with the 5'-terminal helix region of 16S rRNA. This Cereibacter sphaeroides (strain ATCC 17023 / DSM 158 / JCM 6121 / CCUG 31486 / LMG 2827 / NBRC 12203 / NCIMB 8253 / ATH 2.4.1.) (Rhodobacter sphaeroides) protein is Ribosome-binding factor A.